A 70-amino-acid polypeptide reads, in one-letter code: DNA gyrase inhibitor YacG (70 aa).

4 residues coordinate Zn(2+): cysteine 20, cysteine 23, cysteine 35, and cysteine 39.

It belongs to the DNA gyrase inhibitor YacG family. In terms of assembly, interacts with GyrB. The cofactor is Zn(2+).

Functionally, inhibits all the catalytic activities of DNA gyrase by preventing its interaction with DNA. Acts by binding directly to the C-terminal domain of GyrB, which probably disrupts DNA binding by the gyrase. This Rhizobium leguminosarum bv. trifolii (strain WSM2304) protein is DNA gyrase inhibitor YacG.